We begin with the raw amino-acid sequence, 253 residues long: Probable transcriptional regulatory protein RBE_0568 (253 aa).

The tract at residues 1–21 (MAGHSKFKNIQHRKGAQDKKR) is disordered.

The protein belongs to the TACO1 family.

It localises to the cytoplasm. The sequence is that of Probable transcriptional regulatory protein RBE_0568 from Rickettsia bellii (strain RML369-C).